We begin with the raw amino-acid sequence, 129 residues long: Putative reactive intermediate deaminase TdcF (129 aa).

Position 58 is an N6-(pyridoxal phosphate)lysine (Lys58). Residues 105-107 (RSC) and Glu120 contribute to the substrate site.

The protein belongs to the RutC family. Homotrimer.

The protein operates within amino-acid degradation; L-threonine degradation via propanoate pathway. May be a post-translational regulator that controls the metabolic fate of L-threonine or the potentially toxic intermediate 2-ketobutyrate. The polypeptide is Putative reactive intermediate deaminase TdcF (tdcF) (Escherichia coli O6:H1 (strain CFT073 / ATCC 700928 / UPEC)).